A 645-amino-acid polypeptide reads, in one-letter code: ATP-dependent zinc metalloprotease FtsH (645 aa).

Residues 1-8 lie on the Cytoplasmic side of the membrane; the sequence is MDFNREHK. Residues 9 to 29 form a helical membrane-spanning segment; the sequence is INFLYVLAAMVGVLLIQSLVS. Over 30 to 105 the chain is Periplasmic; that stretch reads QPDHIRTIPY…FSGEPEPGPW (76 aa). A helical transmembrane segment spans residues 106 to 126; that stretch reads PTILGWLMPIVGFALVWMFLI. Topologically, residues 127 to 645 are cytoplasmic; that stretch reads RPMSMGPGMD…ALTVEGGEAQ (519 aa). An ATP-binding site is contributed by 199–206; that stretch reads GPPGTGKT. His-423 contacts Zn(2+). The active site involves Glu-424. Residues His-427 and Asp-500 each contribute to the Zn(2+) site. Positions 612–645 are disordered; the sequence is SASVLRDGGDGAADAGQDRSGEHRALTVEGGEAQ. Residues 627 to 637 show a composition bias toward basic and acidic residues; it reads GQDRSGEHRAL.

In the central section; belongs to the AAA ATPase family. The protein in the C-terminal section; belongs to the peptidase M41 family. Homohexamer. Zn(2+) serves as cofactor.

It is found in the cell inner membrane. In terms of biological role, acts as a processive, ATP-dependent zinc metallopeptidase for both cytoplasmic and membrane proteins. Plays a role in the quality control of integral membrane proteins. In Paraburkholderia phymatum (strain DSM 17167 / CIP 108236 / LMG 21445 / STM815) (Burkholderia phymatum), this protein is ATP-dependent zinc metalloprotease FtsH.